The sequence spans 149 residues: UPF0179 protein MM_0589 (149 aa).

Belongs to the UPF0179 family.

This chain is UPF0179 protein MM_0589, found in Methanosarcina mazei (strain ATCC BAA-159 / DSM 3647 / Goe1 / Go1 / JCM 11833 / OCM 88) (Methanosarcina frisia).